Here is a 366-residue protein sequence, read N- to C-terminus: Chorismate synthase (366 aa).

2 residues coordinate NADP(+): arginine 48 and arginine 54. FMN is bound by residues 132–134 (RSS), 244–245 (NA), glycine 289, 304–308 (KPTSS), and arginine 330.

It belongs to the chorismate synthase family. In terms of assembly, homotetramer. FMNH2 serves as cofactor.

It carries out the reaction 5-O-(1-carboxyvinyl)-3-phosphoshikimate = chorismate + phosphate. It participates in metabolic intermediate biosynthesis; chorismate biosynthesis; chorismate from D-erythrose 4-phosphate and phosphoenolpyruvate: step 7/7. Catalyzes the anti-1,4-elimination of the C-3 phosphate and the C-6 proR hydrogen from 5-enolpyruvylshikimate-3-phosphate (EPSP) to yield chorismate, which is the branch point compound that serves as the starting substrate for the three terminal pathways of aromatic amino acid biosynthesis. This reaction introduces a second double bond into the aromatic ring system. This Methylorubrum extorquens (strain PA1) (Methylobacterium extorquens) protein is Chorismate synthase.